A 1785-amino-acid polypeptide reads, in one-letter code: Plexin-2 (1785 aa).

Residues 1 to 17 (MLPESVFLLLISHFLRA) form the signal peptide. Residues 18–444 (VTQPPFETEG…MPYGIILEEL (427 aa)) form the Sema domain. The Extracellular portion of the chain corresponds to 18 to 1139 (VTQPPFETEG…SDHALPSRLS (1122 aa)). An N-linked (GlcNAc...) asparagine glycan is attached at N66. Cystine bridges form between C84–C91, C118–C126, C247–C349, C263–C300, C318–C336, C447–C464, C453–C487, C456–C473, and C467–C479. Residue N249 is glycosylated (N-linked (GlcNAc...) asparagine). The 43-residue stretch at 446–488 (TCSHHSSCTECLVSVDPLCQWCHPTQSCTTSARCTSPVTSQCP) folds into the PSI 1 domain. N-linked (GlcNAc...) asparagine glycosylation is found at N502, N536, and N572. The cysteines at positions 524 and 544 are disulfide-linked. The region spanning 577 to 617 (DCSGYGTCSSCMSSEYNCAWCSGLHKCSNSCGALEKSKACV) is the PSI 2 domain. 2 N-linked (GlcNAc...) asparagine glycosylation sites follow: N679 and N702. The 42-residue stretch at 707–748 (SCTNLASDCSSCLALSPSLSCGWCNRQCSHECHESKATAVCD) folds into the PSI 3 domain. IPT/TIG domains follow at residues 750–837 (PRID…LYSF), 840–924 (TSIF…PFEY), and 928–1040 (PSIS…LSPF). Residues N864, N886, N984, and N1016 are each glycosylated (N-linked (GlcNAc...) asparagine). The helical transmembrane segment at 1140 to 1160 (LLILGLLLFIVVTLTVMCLVF) threads the bilayer. A coiled-coil region spans residues 1159-1197 (VFKRRRQEREKEYRKIQLQMENLENNVRKECKQAFAELQ). Topologically, residues 1161 to 1785 (KRRRQEREKE…HIYSTISDYE (625 aa)) are cytoplasmic.

This sequence belongs to the plexin family. As to quaternary structure, interacts with mab-20. In terms of tissue distribution, expressed predominantly in the central nervous system from embryonic to adult stages. Expressed in early embryos in ventral neuroblasts. Expressed in neurons and in a subset of posterior lateral and ventral epidermal cells following epidermal enclosure. Present in neurons, muscles and weakly expressed in epidermal cells of the larval tail.

It is found in the cell membrane. Functionally, involved as a receptor for mab-20/sema-2a in the formation or stabilization of cell-cell contacts at several stages of epithelial morphogenesis. In early embryonic development, required for proper ventral closure of the epidermis. During male tail morphogenesis, involved in precursor cell sorting and in the formation of distinct sensory rays. Involved in axon guidance of SDQL neurons during neurogenesis. Probably in response to stimulation by mab-20, regulates fln-1-mediated remodeling of the actin cytoskeleton and thus axon guidance and/or fasciculation of DD/VD neurons. This chain is Plexin-2, found in Caenorhabditis elegans.